Reading from the N-terminus, the 359-residue chain is 4-galactosyl-N-acetylglucosaminide 3-alpha-L-fucosyltransferase FUT6 (359 aa).

Residues 1–14 are Cytoplasmic-facing; sequence MDPLGPAKPQWSWR. The helical; Signal-anchor for type II membrane protein transmembrane segment at 15 to 34 threads the bilayer; it reads CCLTTLLFQLLMAVCFFSYL. The Lumenal segment spans residues 35-359; that stretch reads RVSQDDPTVY…QTRGIAAWFT (325 aa). 4 N-linked (GlcNAc...) asparagine glycosylation sites follow: N46, N91, N153, and N184. A determines site-specific fucosylation region spans residues 73 to 112; sequence KPIALPRCSEMVPGTADCNITADRKVYPQADAVIVHHREV.

This sequence belongs to the glycosyltransferase 10 family. In terms of assembly, homodimer and monomer. Monomer (secreted form). N-glycosylated. In terms of processing, proteolytic cleavage releases a secreted glycoform of 43 kDa. In terms of tissue distribution, kidney, liver, colon, small intestine, bladder, uterus and salivary gland.

Its subcellular location is the golgi apparatus. The protein localises to the golgi stack membrane. It localises to the secreted. It catalyses the reaction a beta-D-galactosyl-(1-&gt;4)-N-acetyl-beta-D-glucosaminyl derivative + GDP-beta-L-fucose = a beta-D-galactosyl-(1-&gt;4)-[alpha-L-fucosyl-(1-&gt;3)]-N-acetyl-beta-D-glucosaminyl derivative + GDP + H(+). The catalysed reaction is an N-acetyl-alpha-neuraminyl-(2-&gt;3)-beta-D-galactosyl-(1-&gt;4)-N-acetyl-beta-D-glucosaminyl derivative + GDP-beta-L-fucose = an alpha-Neu5Ac-(2-&gt;3)-beta-D-Gal-(1-&gt;4)-[alpha-L-Fuc-(1-&gt;3)]-beta-D-GlcNAc derivative + GDP + H(+). It carries out the reaction an alpha-Neu5Ac-(2-&gt;3)-beta-D-Gal-(1-&gt;4)-beta-D-GlcNAc-(1-&gt;3)-beta-D-Gal-(1-&gt;4)-[alpha-L-Fuc-(1-&gt;3)]-beta-D-GlcNAc derivative + GDP-beta-L-fucose = an alpha-Neu5Ac-(2-&gt;3)-beta-D-Gal-(1-&gt;4)-[alpha-L-Fuc-(1-&gt;3)]-beta-D-GlcNAc-(1-&gt;3)-beta-D-Gal-(1-&gt;4)-[alpha-L-Fuc-(1-&gt;3)]-beta-D-GlcNAc derivative + GDP + H(+). The enzyme catalyses a neolactoside nLc6Cer + GDP-beta-L-fucose = beta-D-Gal-(1-&gt;4)-[alpha-L-Fuc-(1-&gt;3)]-beta-D-GlcNAc-(1-&gt;3)-beta-D-Gal-(1-&gt;4)-beta-D-GlcNAc-(1-&gt;3)-beta-D-Gal-(1-&gt;4)-beta-D-Glc-(1&lt;-&gt;1')-Cer + GDP + H(+). It catalyses the reaction a neolactoside nLc6Cer + GDP-beta-L-fucose = beta-D-galactosyl-(1-&gt;4)-N-acetyl-beta-D-glucosaminyl-(1-&gt;3)-beta-D-galactosyl-(1-&gt;4)-[alpha-L-fucosyl-(1-&gt;3)]-N-acetyl-beta-D-glucosaminyl-(1-&gt;3)-beta-D-galactosyl-(1-&gt;4)-beta-D-glucosyl-(1&lt;-&gt;1')-ceramide + GDP + H(+). The catalysed reaction is a neolactoside VI(3)-alpha-NeuNAc-nLc6Cer + GDP-beta-L-fucose = a neolactoside VI(3)-alpha-NeuAc,V(3)-alphaFuc-nLc6Cer + GDP + H(+). It carries out the reaction beta-D-galactosyl-(1-&gt;4)-N-acetyl-D-glucosamine + GDP-beta-L-fucose = beta-D-galactosyl-(1-&gt;4)-[alpha-L-fucosyl-(1-&gt;3)]-N-acetyl-D-glucosamine + GDP + H(+). The enzyme catalyses N-acetyl-alpha-neuraminosyl-(2-&gt;3)-beta-D-galactosyl-(1-&gt;4)-N-acetyl-beta-D-glucosamine + GDP-beta-L-fucose = N-acetyl-alpha-neuraminosyl-(2-&gt;3)-beta-D-galactosyl-(1-&gt;4)-[alpha-L-fucosyl-(1-&gt;3)]-N-acetyl-beta-D-glucosamine + GDP + H(+). It catalyses the reaction lactose + GDP-beta-L-fucose = beta-D-galactosyl-(1-&gt;4)-[alpha-L-fucosyl-(1-&gt;3)]-D-glucose + GDP + H(+). The catalysed reaction is alpha-L-Fuc-(1-&gt;2)-beta-D-Gal-(1-&gt;4)-D-Glc + GDP-beta-L-fucose = alpha-L-Fuc-(1-&gt;2)-beta-D-Gal-(1-&gt;4)-[alpha-L-Fuc-(1-&gt;3)]-D-Glc + GDP + H(+). It carries out the reaction a beta-D-galactosyl-(1-&gt;4)-N-acetyl-beta-D-6-sulfooxy-glucosaminyl derivative + GDP-beta-L-fucose = a beta-D-galactosyl-(1-&gt;4)-[alpha-L-fucosyl-(1-&gt;3)]-N-acetyl-beta-D-6-sulfooxy-glucosaminyl derivative + GDP + H(+). The protein operates within protein modification; protein glycosylation. Catalyzes the transfer of L-fucose, from a guanosine diphosphate-beta-L-fucose, to the N-acetyl glucosamine (GlcNAc) of a distal alpha2,3 sialylated lactosamine unit of a glycoprotein- or a glycolipid-linked sialopolylactosamines chain or of a distal or internal lactosamine unit of a neutral glycoprotein- or a glycolipid-linked polylactosamines chain through an alpha-1,3 glycosidic linkage and participates in surface expression of the sialyl Lewis X (sLe(x)), Lewis X (Le(x)) and non sialylated VIM2 determinants. Moreover transfers fucose to H-type 2 (Fucalpha1-2Galbeta1-4GlcNAc) chain acceptor substrates and participates in difucosylated sialyl Lewis x determinants. Also fucosylates a polylactosamine substrate having a 6 sulfate modification at the GlcNAc moiety and gives rise to sialyl and non-sialyl 6-sulfo lewis X. Does not have activity towards type 1 ((Galbeta1-3GlcNAc)) and H-type 1 chain (Fucalpha1-2Galbeta1-3GlcNAc) acceptors substrates. Functionally, does not have alpha(1,3)-fucosyltransferase activity. The sequence is that of 4-galactosyl-N-acetylglucosaminide 3-alpha-L-fucosyltransferase FUT6 from Homo sapiens (Human).